The primary structure comprises 238 residues: uncharacterized protein (238 aa).

This sequence belongs to the chlamydial CPn_0658/CT_538/TC_0825 family.

This is an uncharacterized protein from Chlamydia trachomatis serovar D (strain ATCC VR-885 / DSM 19411 / UW-3/Cx).